Reading from the N-terminus, the 139-residue chain is Large ribosomal subunit protein uL16 (139 aa).

This sequence belongs to the universal ribosomal protein uL16 family. Part of the 50S ribosomal subunit.

In terms of biological role, binds 23S rRNA and is also seen to make contacts with the A and possibly P site tRNAs. In Treponema pallidum (strain Nichols), this protein is Large ribosomal subunit protein uL16.